The sequence spans 504 residues: Glutamate--tRNA ligase (504 aa).

Residues 9 to 19 (PSPTGDPHVGT) carry the 'HIGH' region motif. The 'KMSKS' region motif lies at 248–252 (KISKR). ATP is bound at residue lysine 251.

The protein belongs to the class-I aminoacyl-tRNA synthetase family. Glutamate--tRNA ligase type 1 subfamily. In terms of assembly, monomer.

It localises to the cytoplasm. It carries out the reaction tRNA(Glu) + L-glutamate + ATP = L-glutamyl-tRNA(Glu) + AMP + diphosphate. Its function is as follows. Catalyzes the attachment of glutamate to tRNA(Glu) in a two-step reaction: glutamate is first activated by ATP to form Glu-AMP and then transferred to the acceptor end of tRNA(Glu). This chain is Glutamate--tRNA ligase, found in Acidothermus cellulolyticus (strain ATCC 43068 / DSM 8971 / 11B).